The sequence spans 193 residues: Xanthine phosphoribosyltransferase (193 aa).

Positions 20 and 27 each coordinate xanthine. 5-phospho-alpha-D-ribose 1-diphosphate is bound at residue 128 to 132 (ANGQA). Lys-156 serves as a coordination point for xanthine.

It belongs to the purine/pyrimidine phosphoribosyltransferase family. Xpt subfamily. As to quaternary structure, homodimer.

Its subcellular location is the cytoplasm. The catalysed reaction is XMP + diphosphate = xanthine + 5-phospho-alpha-D-ribose 1-diphosphate. It participates in purine metabolism; XMP biosynthesis via salvage pathway; XMP from xanthine: step 1/1. Converts the preformed base xanthine, a product of nucleic acid breakdown, to xanthosine 5'-monophosphate (XMP), so it can be reused for RNA or DNA synthesis. This is Xanthine phosphoribosyltransferase from Streptococcus pneumoniae serotype 4 (strain ATCC BAA-334 / TIGR4).